A 153-amino-acid chain; its full sequence is MNEEVNKIITLCGKDWAKIGVEFIFLGGKQECENCKIKKTCLKLKEGAKYKIVGLRDGAVQECPLHDEGVVAVEVVELPIIALVDSKIAVEGAKIHYEQRKCDVYDCSMYSLCHPIELNNGETVIVEKVIGDAPEQCRKGHSVIVAELRRAEE.

It belongs to the UPF0179 family.

This Archaeoglobus fulgidus (strain ATCC 49558 / DSM 4304 / JCM 9628 / NBRC 100126 / VC-16) protein is UPF0179 protein AF_2154.